A 183-amino-acid polypeptide reads, in one-letter code: Lipid droplet coating protein mpl1 (183 aa).

This sequence belongs to the perilipin family.

The protein resides in the lipid droplet. Its function is as follows. Lipid droplet coating protein that regulates lipid metabolism, appressorial turgor pressure, and virulence. Appressorial turgor pressure is important for breaching the insect cuticle during infection. The polypeptide is Lipid droplet coating protein mpl1 (Metarhizium robertsii (strain ARSEF 23 / ATCC MYA-3075) (Metarhizium anisopliae (strain ARSEF 23))).